The following is a 304-amino-acid chain: Glutaminase (304 aa).

Substrate-binding residues include serine 61, asparagine 113, glutamate 158, asparagine 165, tyrosine 189, tyrosine 240, and valine 258.

Belongs to the glutaminase family. Homotetramer.

It catalyses the reaction L-glutamine + H2O = L-glutamate + NH4(+). This chain is Glutaminase, found in Fusobacterium nucleatum subsp. nucleatum (strain ATCC 25586 / DSM 15643 / BCRC 10681 / CIP 101130 / JCM 8532 / KCTC 2640 / LMG 13131 / VPI 4355).